An 874-amino-acid polypeptide reads, in one-letter code: Alanine--tRNA ligase (874 aa).

Zn(2+) is bound by residues H562, H566, C665, and H669.

The protein belongs to the class-II aminoacyl-tRNA synthetase family. Zn(2+) serves as cofactor.

It localises to the cytoplasm. It carries out the reaction tRNA(Ala) + L-alanine + ATP = L-alanyl-tRNA(Ala) + AMP + diphosphate. In terms of biological role, catalyzes the attachment of alanine to tRNA(Ala) in a two-step reaction: alanine is first activated by ATP to form Ala-AMP and then transferred to the acceptor end of tRNA(Ala). Also edits incorrectly charged Ser-tRNA(Ala) and Gly-tRNA(Ala) via its editing domain. The polypeptide is Alanine--tRNA ligase (Pseudomonas aeruginosa (strain ATCC 15692 / DSM 22644 / CIP 104116 / JCM 14847 / LMG 12228 / 1C / PRS 101 / PAO1)).